Reading from the N-terminus, the 88-residue chain is UPF0297 protein BcerKBAB4_4234 (88 aa).

Belongs to the UPF0297 family.

The sequence is that of UPF0297 protein BcerKBAB4_4234 from Bacillus mycoides (strain KBAB4) (Bacillus weihenstephanensis).